A 291-amino-acid polypeptide reads, in one-letter code: DegV domain-containing protein CPE0026 (291 aa).

In terms of domain architecture, DegV spans 4–286; the sequence is FVIFTDSAAD…IGTLAVFFLG (283 aa). 2 residues coordinate hexadecanoate: threonine 63 and serine 95.

May bind long-chain fatty acids, such as palmitate, and may play a role in lipid transport or fatty acid metabolism. This Clostridium perfringens (strain 13 / Type A) protein is DegV domain-containing protein CPE0026.